We begin with the raw amino-acid sequence, 348 residues long: 3-isopropylmalate dehydrogenase (348 aa).

NAD(+) is bound at residue 76 to 87; that stretch reads GPKWTDPNNRPE. Residues arginine 94, arginine 104, arginine 132, and aspartate 217 each coordinate substrate. Residues aspartate 217, aspartate 241, and aspartate 245 each contribute to the Mg(2+) site. Residue 275–287 participates in NAD(+) binding; the sequence is GSAPDIAGKNVAN.

This sequence belongs to the isocitrate and isopropylmalate dehydrogenases family. LeuB type 1 subfamily. In terms of assembly, homodimer. Mg(2+) is required as a cofactor. The cofactor is Mn(2+).

It localises to the cytoplasm. It catalyses the reaction (2R,3S)-3-isopropylmalate + NAD(+) = 4-methyl-2-oxopentanoate + CO2 + NADH. Its pathway is amino-acid biosynthesis; L-leucine biosynthesis; L-leucine from 3-methyl-2-oxobutanoate: step 3/4. In terms of biological role, catalyzes the oxidation of 3-carboxy-2-hydroxy-4-methylpentanoate (3-isopropylmalate) to 3-carboxy-4-methyl-2-oxopentanoate. The product decarboxylates to 4-methyl-2 oxopentanoate. This chain is 3-isopropylmalate dehydrogenase, found in Staphylococcus aureus (strain Mu50 / ATCC 700699).